Here is a 449-residue protein sequence, read N- to C-terminus: uncharacterized protein (449 aa).

Disordered stretches follow at residues 1–58 (MVKR…SLSS) and 71–125 (EALE…VVEL). Residues 30-46 (KQRDELREKQKRKREDS) are compositionally biased toward basic and acidic residues. Residues 103–124 (SDDDDDDNEEEDDNGFEDQVVE) are compositionally biased toward acidic residues.

It belongs to the bystin family.

This is an uncharacterized protein from Caenorhabditis elegans.